A 441-amino-acid chain; its full sequence is Collagen alpha-1(XXVI) chain (441 aa).

The signal sequence occupies residues 1 to 20 (MKLALLLPWACCCLCGSALA). Residues 52–128 (RRHWCHHTVT…PGFTGSNCDE (77 aa)) form the EMI domain. Disulfide bonds link C56–C118, C83–C89, and C117–C126. N-linked (GlcNAc...) asparagine glycosylation occurs at N70. Residue N132 is glycosylated (N-linked (GlcNAc...) asparagine). 2 disordered regions span residues 156-362 (AERP…AEGE) and 390-441 (PLAS…SSRK). 2 consecutive Collagen-like domains span residues 199 to 267 (GPAG…PGPS) and 302 to 355 (GVPG…EGEK). Pro residues-rich tracts occupy residues 200-215 (PAGP…PAGP), 231-243 (AGPP…PGPR), 252-269 (PGPP…PSPN), and 306-327 (PRGP…PPGT). Positions 348–357 (VKGEEGEKAA) are enriched in basic and acidic residues.

Homotrimer or heterotrimer. Hydroxylated on proline residues.

The protein resides in the secreted. Its subcellular location is the extracellular space. The protein localises to the extracellular matrix. In Homo sapiens (Human), this protein is Collagen alpha-1(XXVI) chain (COL26A1).